The following is a 328-amino-acid chain: DNA-directed RNA polymerase subunit alpha (328 aa).

Residues 1–230 (MIQITGRKFK…IILDHFMFIE (230 aa)) are alpha N-terminal domain (alpha-NTD). An alpha C-terminal domain (alpha-CTD) region spans residues 257-328 (PEDVMSKKVE…FGLSLRKGDK (72 aa)).

This sequence belongs to the RNA polymerase alpha chain family. Homodimer. The RNAP catalytic core consists of 2 alpha, 1 beta, 1 beta' and 1 omega subunit. When a sigma factor is associated with the core the holoenzyme is formed, which can initiate transcription.

The catalysed reaction is RNA(n) + a ribonucleoside 5'-triphosphate = RNA(n+1) + diphosphate. Functionally, DNA-dependent RNA polymerase catalyzes the transcription of DNA into RNA using the four ribonucleoside triphosphates as substrates. This is DNA-directed RNA polymerase subunit alpha from Fervidobacterium nodosum (strain ATCC 35602 / DSM 5306 / Rt17-B1).